Reading from the N-terminus, the 398-residue chain is Cell adhesion molecule 3 (398 aa).

The first 24 residues, 1-24, serve as a signal peptide directing secretion; sequence MGAPAASLLLLLLLFACCWAPGGA. One can recognise an Ig-like V-type domain in the interval 25–126; the sequence is NLSQDDSQPW…VRTAKSLVTV (102 aa). Over 25–330 the chain is Extracellular; that stretch reads NLSQDDSQPW…PVPSSSSTYH (306 aa). Intrachain disulfides connect C50–C110, C152–C209, and C254–C299. Ig-like C2-type domains follow at residues 130-228 and 233-315; these read PQKP…QRIE and PTAM…YTLN. An N-linked (GlcNAc...) asparagine glycan is attached at N290. The chain crosses the membrane as a helical span at residues 331–351; the sequence is AIIGGIVAFIVFLLLIMLIFL. Over 352–398 the chain is Cytoplasmic; it reads GHYLIRHKGTYLTHEAKGSDDAPDADTAIINAEGGQSGGDDKKEYFI. The disordered stretch occupies residues 367–398; sequence AKGSDDAPDADTAIINAEGGQSGGDDKKEYFI. At S388 the chain carries Phosphoserine.

Belongs to the nectin family. In terms of assembly, homodimer. Can form trans-heterodimers with NECTIN3. Interacts with EPB41L1, DLG3, PALS2 and CASK. In terms of tissue distribution, isoform 1 is expressed mainly in adult and fetal brain. Isoform 2 is highly expressed in adult brain and weakly expressed in placenta. In brain, Isoform 2 is highly expressed in cerebellum.

It localises to the cell membrane. The protein localises to the cell junction. Involved in cell-cell adhesion. Has both calcium-independent homophilic cell-cell adhesion activity and calcium-independent heterophilic cell-cell adhesion activity with IGSF4, NECTIN1 and NECTIN3. Interaction with EPB41L1 may regulate structure or function of cell-cell junctions. The protein is Cell adhesion molecule 3 (CADM3) of Homo sapiens (Human).